A 58-amino-acid chain; its full sequence is Large ribosomal subunit protein bL32 (58 aa).

Residues 1-15 (MAVPKKKTSKAKRNQ) show a composition bias toward basic residues. Residues 1 to 23 (MAVPKKKTSKAKRNQRSATWKGK) form a disordered region.

This sequence belongs to the bacterial ribosomal protein bL32 family.

The protein is Large ribosomal subunit protein bL32 of Parasynechococcus marenigrum (strain WH8102).